The chain runs to 337 residues: CMP-N-acetylneuraminate-beta-galactosamide-alpha-2,3-sialyltransferase 1 (337 aa).

At 1–4 (MRRK) the chain is on the cytoplasmic side. Residues 5–25 (TLKYLTFFLLFIFLTSFVLNY) form a helical; Signal-anchor for type II membrane protein membrane-spanning segment. At 26 to 337 (SNTGVPSAWF…INKIRIFKGR (312 aa)) the chain is on the lumenal side. 3 disulfides stabilise this stretch: cysteine 56–cysteine 61, cysteine 58–cysteine 136, and cysteine 139–cysteine 278. Asparagine 76 carries N-linked (GlcNAc...) asparagine glycosylation. Glutamine 102 is a binding site for substrate. N-linked (GlcNAc...) asparagine glycosylation occurs at asparagine 109. Substrate-binding residues include asparagine 144, asparagine 167, tyrosine 227, tyrosine 263, glycine 267, glycine 287, histidine 296, and histidine 313. Asparagine 320 is a glycosylation site (N-linked (GlcNAc...) asparagine).

The protein belongs to the glycosyltransferase 29 family. Post-translationally, the soluble form derives from the membrane form by proteolytic processing. Highly expressed in submaxillary gland and to a much lesser extent in liver, lung, kidney, heart and brain.

It is found in the golgi apparatus. It localises to the golgi stack membrane. The protein localises to the trans-Golgi network membrane. Its subcellular location is the secreted. It catalyses the reaction a beta-D-galactosyl-(1-&gt;3)-N-acetyl-alpha-D-galactosaminyl derivative + CMP-N-acetyl-beta-neuraminate = an N-acetyl-alpha-neuraminyl-(2-&gt;3)-beta-D-galactosyl-(1-&gt;3)-N-acetyl-alpha-D-galactosaminyl derivative + CMP + H(+). The catalysed reaction is a ganglioside GM1 (d18:1(4E)) + CMP-N-acetyl-beta-neuraminate = a ganglioside GD1a (d18:1(4E)) + CMP + H(+). The enzyme catalyses ganglioside GM1 (d18:1(4E)/18:0) + CMP-N-acetyl-beta-neuraminate = ganglioside GD1a (18:1(4E)/18:0) + CMP + H(+). It carries out the reaction a ganglioside GA1 + CMP-N-acetyl-beta-neuraminate = a ganglioside GM1b + CMP + H(+). It catalyses the reaction a ganglioside GA1 (d18:1(4E)) + CMP-N-acetyl-beta-neuraminate = a ganglioside GM1b (d18:1(4E)) + CMP + H(+). The catalysed reaction is a ganglioside GD1b + CMP-N-acetyl-beta-neuraminate = a ganglioside GT1b + CMP + H(+). The enzyme catalyses a 3-O-[beta-D-galactosyl-(1-&gt;3)-N-acetyl-alpha-D-galactosaminyl]-L-threonyl-[protein] + CMP-N-acetyl-beta-neuraminate = a 3-O-[N-acetyl-alpha-neuraminyl-(2-&gt;3)-beta-D-galactosyl-(1-&gt;3)-N-acetyl-alpha-D-galactosaminyl]-L-threonyl-[protein] + CMP + H(+). It carries out the reaction a 3-O-[beta-D-galactosyl-(1-&gt;3)-N-acetyl-alpha-D-galactosaminyl]-L-seryl-[protein] + CMP-N-acetyl-beta-neuraminate = 3-O-[N-acetyl-alpha-neuraminyl-(2-&gt;3)-beta-D-galactosyl-(1-&gt;3)-N-acetyl-alpha-D-galactosaminyl]-L-seryl-[protein] + CMP + H(+). The protein operates within protein modification; protein glycosylation. It participates in glycolipid biosynthesis. Its function is as follows. A beta-galactoside alpha2-&gt;3 sialyltransferase involved in terminal sialylation of glycoproteins and glycolipids. Catalyzes the transfer of sialic acid (N-acetyl-neuraminic acid; Neu5Ac) from the nucleotide sugar donor CMP-Neu5Ac onto acceptor Galbeta-(1-&gt;3)-GalNAc-terminated glycoconjugates through an alpha2-3 linkage. Adds sialic acid to the core 1 O-glycan, Galbeta-(1-&gt;3)-GalNAc-O-Ser/Thr, which is a major structure of mucin-type O-glycans. As part of a homeostatic mechanism that regulates CD8-positive T cell numbers, sialylates core 1 O-glycans of T cell glycoproteins, SPN/CD43 and PTPRC/CD45. Prevents premature apoptosis of thymic CD8-positive T cells prior to peripheral emigration, whereas in the secondary lymphoid organs controls the survival of CD8-positive memory T cells generated following a successful immune response. Transfers sialic acid to asialofetuin, presumably onto Galbeta-(1-&gt;3)-GalNAc-O-Ser. Sialylates GM1a, GA1 and GD1b gangliosides to form GD1a, GM1b and GT1b, respectively. The polypeptide is CMP-N-acetylneuraminate-beta-galactosamide-alpha-2,3-sialyltransferase 1 (St3gal1) (Mus musculus (Mouse)).